Consider the following 178-residue polypeptide: Thymidine kinase (178 aa).

Residue glycine 13–serine 20 coordinates ATP. The active-site Proton acceptor is the glutamate 85. Phenylalanine 115 is a binding site for substrate. 2 residues coordinate Zn(2+): cysteine 140 and cysteine 143. Isoleucine 159–glycine 163 is a substrate binding site. 2 residues coordinate Zn(2+): cysteine 172 and cysteine 175.

The protein belongs to the thymidine kinase family.

The catalysed reaction is thymidine + ATP = dTMP + ADP + H(+). The polypeptide is Thymidine kinase (TK) (Myxoma virus (strain Lausanne) (MYXV)).